Here is a 3933-residue protein sequence, read N- to C-terminus: Protein DOP1 homolog PFC0245c (3933 aa).

The next 4 membrane-spanning stretches (helical) occupy residues 70–90, 98–118, 140–160, and 163–183; these read LNPL…SSIF, FINN…HCTI, IFAY…NNIL, and IYSI…WLLL. Disordered regions lie at residues 468-494, 543-600, and 614-656; these read RLNN…KYQG, ININ…NMLH, and KKIN…SSSS. Positions 470–486 are enriched in low complexity; that stretch reads NNNNNNNNNNNNNNNNN. Acidic residues predominate over residues 546 to 561; it reads NDDDNLNYDDNEDDEY. Low complexity-rich tracts occupy residues 563–576 and 585–597; these read NYHN…NYFN and ENNN…NNNN. A coiled-coil region spans residues 620–651; that stretch reads GQTNNYDDDEEEEDEEEEDNNNNTSYNNNNNN. The span at 625-639 shows a compositional bias: acidic residues; the sequence is YDDDEEEEDEEEEDN. Low complexity predominate over residues 640–656; the sequence is NNNTSYNNNNNNSSSSS. A run of 3 helical transmembrane segments spans residues 782–802, 842–862, and 1186–1206; these read MLNL…YTFY, YLYI…MNFL, and FYFW…KSLL. A compositionally biased stretch (acidic residues) spans 1216 to 1255; that stretch reads DDTDDDDDDDDDDDDEEEDDDDEDDDDEDDEEEDDEEDLG. Disordered stretches follow at residues 1216-1284 and 1361-1405; these read DDTD…MNKK and TNNN…NNFN. Residues 1263–1284 are compositionally biased toward basic residues; that stretch reads SSKKGKKKKKKSVHKNKLMNKK. Positions 1349 to 1403 form a coiled coil; that stretch reads ELNKMKYMNEDITNNNNNINNNSNNNNNNKNNINNNNNNNNNNNNNNNNLNNLNN. The span at 1362 to 1405 shows a compositional bias: low complexity; sequence NNNNNINNNSNNNNNNKNNINNNNNNNNNNNNNNNNLNNLNNFN. A run of 2 helical transmembrane segments spans residues 1462 to 1482 and 1997 to 2017; these read FIKL…MFCL and KNIF…KLIY. The segment at 2691 to 2739 is disordered; that stretch reads HRRKMNRQNIRTDSSNNNNNNNINSNNNNNNNNNNNNNNNNNNNNNIYN. Residues 2704 to 2739 show a composition bias toward low complexity; it reads SSNNNNNNNINSNNNNNNNNNNNNNNNNNNNNNIYN. A run of 5 helical transmembrane segments spans residues 2860-2880, 2905-2925, 3017-3037, 3200-3220, and 3276-3296; these read INLN…CTLT, IMSS…HIYV, YSEI…YHTV, ILIL…YIII, and IIIN…SWIF. The segment at 3620-3646 is disordered; it reads LKNEKSTRTYNSSLQEGSDYDEEEDEE. Residues 3637 to 3646 are compositionally biased toward acidic residues; that stretch reads SDYDEEEDEE. Positions 3897–3925 form a coiled coil; that stretch reads KEETIILLKELNSVENDINDLFLEVDLNE.

This sequence belongs to the DOP1 family.

It is found in the membrane. Its function is as follows. May be involved in protein traffic between late Golgi and early endosomes. This Plasmodium falciparum (isolate 3D7) protein is Protein DOP1 homolog PFC0245c.